The sequence spans 632 residues: tRNA uridine 5-carboxymethylaminomethyl modification enzyme MnmG (632 aa).

FAD contacts are provided by residues 15–20, Ile127, and Ser182; that span reads GAGHAG. 276–290 is a binding site for NAD(+); that stretch reads GPRYCPSIEDKIVRF. Residue Gln373 participates in FAD binding.

Belongs to the MnmG family. In terms of assembly, homodimer. Heterotetramer of two MnmE and two MnmG subunits. It depends on FAD as a cofactor.

The protein localises to the cytoplasm. Its function is as follows. NAD-binding protein involved in the addition of a carboxymethylaminomethyl (cmnm) group at the wobble position (U34) of certain tRNAs, forming tRNA-cmnm(5)s(2)U34. This is tRNA uridine 5-carboxymethylaminomethyl modification enzyme MnmG from Streptococcus pyogenes serotype M28 (strain MGAS6180).